We begin with the raw amino-acid sequence, 389 residues long: MQPSFTPSGGKWLSIAVILLVIGLVVGFAAGRFTAPIQQSKELNTFAAGSLKYALGNDFNPEFNNLTGIKVGMTFSGSISGAKEVQAGKQYSVFVSASAPVLYQNLINNTHYASWQIVFSANEMAITWTNSKYAINPSWPYWFENITKNSTIVAASNASLDPSGFQAIETMKLAGILYTNWSDPFVQMAFNHNESLFLQYNKAYNTWFEKLGYKANDSLALYHQIFISKYLNHTTKLTTVEIGLDGYLTSGAADYALTYVSQAINQNLSYYKSATGGNGLPIWINLGSLNKTIDQFYEQINESGPAWDNVGNLPGAPILYSVTIINNYTSPYAVQYVYDLITQMGQHYLAMSRFDPLSQPFGINISNMPKQLQAVVTPPPSYLPVSAYE.

An N-terminal signal peptide occupies residues 1–29; the sequence is MQPSFTPSGGKWLSIAVILLVIGLVVGFA.

It belongs to the bacterial solute-binding protein 1 family. WtpA subfamily.

This is an uncharacterized protein from Thermoplasma volcanium (strain ATCC 51530 / DSM 4299 / JCM 9571 / NBRC 15438 / GSS1).